A 455-amino-acid polypeptide reads, in one-letter code: Protein chibby homolog 2 (455 aa).

Residues serine 41, serine 86, serine 89, serine 97, serine 124, serine 144, serine 148, and serine 150 each carry the phosphoserine modification. Positions 160–197 (KRLAKECLLQENKTLREENRALREENRMLRKENKILQV) form a coiled coil. Serine 211 and serine 225 each carry phosphoserine. The stretch at 240–266 (GRENSTLQLLREENRALQQLLEQRKAY) forms a coiled coil. A disordered region spans residues 267–318 (WAQPDEKAASTEEIKPISSPHEEPHGLLPDPGPGLPSPFEEPKGLPAPPDDS). Basic and acidic residues predominate over residues 270-291 (PDEKAASTEEIKPISSPHEEPH). Phosphoserine occurs at positions 276 and 332. A coiled-coil region spans residues 350 to 421 (SQSLELLREM…KLKLQQKLVI (72 aa)).

This sequence belongs to the chibby family. SPERT subfamily. As to quaternary structure, homodimer. Binds to NEK1.

The polypeptide is Protein chibby homolog 2 (CBY2) (Bos taurus (Bovine)).